An 85-amino-acid polypeptide reads, in one-letter code: UPF0386 protein RHECIAT_CH0001945 (85 aa).

This sequence belongs to the UPF0386 family.

The chain is UPF0386 protein RHECIAT_CH0001945 from Rhizobium etli (strain CIAT 652).